We begin with the raw amino-acid sequence, 515 residues long: Galactose-1-phosphate uridylyltransferase (515 aa).

The protein belongs to the galactose-1-phosphate uridylyltransferase type 2 family.

Its subcellular location is the cytoplasm. It carries out the reaction alpha-D-galactose 1-phosphate + UDP-alpha-D-glucose = alpha-D-glucose 1-phosphate + UDP-alpha-D-galactose. It functions in the pathway carbohydrate metabolism; galactose metabolism. In terms of biological role, transfers the UMP unit from UDP-glucose (UDP-Glc) to Gal1P. Can also transfer the UMP unit to GlcNAc1P and GalNAc1P. Involved in the general galactose metabolism, and also involved in the lacto-N-biose I/galacto-N-biose (LNB/GNB) degradation pathway, which is important for host intestinal colonization by bifidobacteria. The protein is Galactose-1-phosphate uridylyltransferase of Bifidobacterium longum subsp. longum (strain ATCC 15707 / DSM 20219 / JCM 1217 / NCTC 11818 / E194b).